The primary structure comprises 353 residues: Heat-inducible transcription repressor HrcA (353 aa).

The protein belongs to the HrcA family.

Functionally, negative regulator of class I heat shock genes (grpE-dnaK-dnaJ and groELS operons). Prevents heat-shock induction of these operons. The chain is Heat-inducible transcription repressor HrcA from Synechococcus elongatus (strain ATCC 33912 / PCC 7942 / FACHB-805) (Anacystis nidulans R2).